The primary structure comprises 1121 residues: PR domain zinc finger protein 10 (1121 aa).

Disordered regions lie at residues 1-24 and 92-125; these read MEAKQESSTVWSTASNNDTGNTPQ and TEASSSPLGATDSTVDSEDEEEDNDSEDSEMDDW. Residues 106 to 124 show a composition bias toward acidic residues; sequence VDSEDEEEDNDSEDSEMDD. Residues 173 to 290 enclose the SET domain; that stretch reads LPLVLYIDRF…PKQELKVWYA (118 aa). The N-terminal PR domain; essential for transcriptional activation stretch occupies residues 192-295; sequence IPKRTQFGPL…KVWYAASYAE (104 aa). Residues 319-341 form a C2H2-type 1 zinc finger; the sequence is WPCYECNRRFMSSEQLQQHLNMH. Disordered regions lie at residues 350 to 387 and 419 to 473; these read RPKSRGRGRGRKRFGGARRPGRRTKFLCPQTPVESADK and ESME…PHLT. Positions 351–374 are enriched in basic residues; sequence PKSRGRGRGRKRFGGARRPGRRTK. 9 consecutive C2H2-type zinc fingers follow at residues 500–522, 529–551, 557–579, 585–608, 613–635, 641–664, 696–719, 741–764, and 803–826; these read FKCPQCGKAFRDKEKLEQHMRFH, HVCHQCGKGFLSSTSLEDHLVLH, YSCLFCAESYDRLELLKVHVGIH, FLCPSCKKSFTDFIQVKKHVRSFH, FQCSECDKAFCRPDKLRLHMLRH, FLCSTCGKQFKRKDKLREHMQRMH, FKCRLCMMGFRRRGMLVNHLSKRH, YYCQYCDKVYKSASKRKAHILKNH, and VCCPHCAKQYSSKTKMVQHIRKKH. The segment at 871–1101 is C-terminal glutamine-rich region; essential for transcriptional activation; sequence QAMTELSQTL…PAGGQQATTQ (231 aa). The segment at 1077-1097 is disordered; the sequence is VPSTATQGHPDPLEQPAGGQQ.

This sequence belongs to the class V-like SAM-binding methyltransferase superfamily.

The protein localises to the nucleus. Transcriptional activator, essential for early embryonic development and survival of embryonic stem cells (ESCs). Supports cell growth and survival during early development by transcriptionally activating the expression of the translation initiation factor EIF3B, to sustain global translation. Activates the transcription of FLNC. In Danio rerio (Zebrafish), this protein is PR domain zinc finger protein 10 (prdm10).